The primary structure comprises 409 residues: Argininosuccinate synthase (409 aa).

ATP is bound by residues 11-19 (AYSGGLDTS) and A38. L-citrulline-binding residues include Y91 and S96. Residue G121 participates in ATP binding. 3 residues coordinate L-aspartate: T123, N127, and D128. N127 provides a ligand contact to L-citrulline. L-citrulline is bound by residues R131, S182, S191, E267, and Y279.

Belongs to the argininosuccinate synthase family. Type 1 subfamily. As to quaternary structure, homotetramer.

It localises to the cytoplasm. The catalysed reaction is L-citrulline + L-aspartate + ATP = 2-(N(omega)-L-arginino)succinate + AMP + diphosphate + H(+). Its pathway is amino-acid biosynthesis; L-arginine biosynthesis; L-arginine from L-ornithine and carbamoyl phosphate: step 2/3. The polypeptide is Argininosuccinate synthase (Nitrobacter winogradskyi (strain ATCC 25391 / DSM 10237 / CIP 104748 / NCIMB 11846 / Nb-255)).